Reading from the N-terminus, the 137-residue chain is Putative pre-16S rRNA nuclease (137 aa).

Belongs to the YqgF nuclease family.

It is found in the cytoplasm. In terms of biological role, could be a nuclease involved in processing of the 5'-end of pre-16S rRNA. This is Putative pre-16S rRNA nuclease from Actinobacillus pleuropneumoniae serotype 7 (strain AP76).